A 383-amino-acid chain; its full sequence is Putative glutamate--cysteine ligase 2 (383 aa).

This sequence belongs to the glutamate--cysteine ligase type 2 family. YbdK subfamily.

It catalyses the reaction L-cysteine + L-glutamate + ATP = gamma-L-glutamyl-L-cysteine + ADP + phosphate + H(+). In terms of biological role, ATP-dependent carboxylate-amine ligase which exhibits weak glutamate--cysteine ligase activity. The polypeptide is Putative glutamate--cysteine ligase 2 (Clavibacter michiganensis subsp. michiganensis (strain NCPPB 382)).